Here is a 425-residue protein sequence, read N- to C-terminus: Serine--tRNA ligase (425 aa).

233–235 (TAE) serves as a coordination point for L-serine. 264 to 266 (RRE) contacts ATP. Glutamate 287 contacts L-serine. 351–354 (EISS) provides a ligand contact to ATP. An L-serine-binding site is contributed by serine 385.

The protein belongs to the class-II aminoacyl-tRNA synthetase family. Type-1 seryl-tRNA synthetase subfamily. In terms of assembly, homodimer. The tRNA molecule binds across the dimer.

The protein resides in the cytoplasm. It catalyses the reaction tRNA(Ser) + L-serine + ATP = L-seryl-tRNA(Ser) + AMP + diphosphate + H(+). The catalysed reaction is tRNA(Sec) + L-serine + ATP = L-seryl-tRNA(Sec) + AMP + diphosphate + H(+). It participates in aminoacyl-tRNA biosynthesis; selenocysteinyl-tRNA(Sec) biosynthesis; L-seryl-tRNA(Sec) from L-serine and tRNA(Sec): step 1/1. Its function is as follows. Catalyzes the attachment of serine to tRNA(Ser). Is also able to aminoacylate tRNA(Sec) with serine, to form the misacylated tRNA L-seryl-tRNA(Sec), which will be further converted into selenocysteinyl-tRNA(Sec). The protein is Serine--tRNA ligase of Synechococcus sp. (strain CC9605).